A 125-amino-acid chain; its full sequence is Small ribosomal subunit protein uS13 (125 aa).

Residues 97 to 125 (PLRGQRTKTNARTRKGKRKTVANKKMASK) are disordered.

Belongs to the universal ribosomal protein uS13 family. As to quaternary structure, part of the 30S ribosomal subunit. Forms a loose heterodimer with protein S19. Forms two bridges to the 50S subunit in the 70S ribosome.

Its function is as follows. Located at the top of the head of the 30S subunit, it contacts several helices of the 16S rRNA. In the 70S ribosome it contacts the 23S rRNA (bridge B1a) and protein L5 of the 50S subunit (bridge B1b), connecting the 2 subunits; these bridges are implicated in subunit movement. Contacts the tRNAs in the A and P-sites. The protein is Small ribosomal subunit protein uS13 of Borrelia hermsii (strain HS1 / DAH).